The chain runs to 338 residues: Heat-inducible transcription repressor HrcA (338 aa).

It belongs to the HrcA family.

In terms of biological role, negative regulator of class I heat shock genes (grpE-dnaK-dnaJ and groELS operons). Prevents heat-shock induction of these operons. The polypeptide is Heat-inducible transcription repressor HrcA (Bacillus cereus (strain AH187)).